The following is a 216-amino-acid chain: Ras-related protein RABE1d (216 aa).

22-29 (GDSGVGKS) is a binding site for GTP. The Effector region motif lies at 44–52 (FITTIGIDF). GTP-binding positions include 70 to 74 (DTAGQ), 128 to 131 (NKAD), and 159 to 160 (SA). The segment at 196–216 (TKQDTAASSSTAEKSACCSYV) is disordered. Residues 200-216 (TAASSSTAEKSACCSYV) are compositionally biased toward low complexity. 2 S-geranylgeranyl cysteine lipidation sites follow: cysteine 212 and cysteine 213.

The protein belongs to the small GTPase superfamily. Rab family. In terms of assembly, interacts with PI5K2.

It localises to the golgi apparatus membrane. Its subcellular location is the cell membrane. Functionally, involved in membrane trafficking from the Golgi to the plasma membrane. The polypeptide is Ras-related protein RABE1d (RABE1D) (Arabidopsis thaliana (Mouse-ear cress)).